The sequence spans 517 residues: MGCVFCKKLEPAPKEDVGLEGDFRSQGAEERYYPDPTQGRSSSISPQPISPAFLNVGNIRSVSGTGVTIFVALYDYEARTGDDLTFTKGEKFHILNNTEYDWWEARSLSSGRTGYVPSNYVAPVDSIQAEEWYFGKISRKDAERQLLSDGNPQGAFLIRESETTKGAYSLSIRDWDQNRGDHIKHYKIRKLDMGGYYITTRAQFESVQDLVRHYMEVNDGLCYLLTAPCMVMKPQTLGLAKDAWEIDRNSIALDRRLGTGCFGDVWLGTWNCSTKVAVKTLKPGTMSPKAFLEEAQIMKLLRHDKLVQLYAVVSEEPIYIVTEFMCYGSLLDFLKDRKGHNLMLPNLVDMAAQVAEGMAYMERMNYIHRDLRAANILVGEHLICKIADFGLARLIVDDEYNPQQGTKFPIKWTAPEAALFGRFTVKSDVWSFGILLTELITKGRVPYPGMNNREVLEQVEHGYHMPCPPGCPVSLYEVMEQTWRLDPEERPTFEYLQSFLEDYFTSTEPQYQPGDQT.

A lipid anchor (N-myristoyl glycine) is attached at Gly-2. 2 S-palmitoyl cysteine lipidation sites follow: Cys-3 and Cys-6. The span at 17–33 shows a compositional bias: basic and acidic residues; sequence VGLEGDFRSQGAEERYY. The disordered stretch occupies residues 17-46; that stretch reads VGLEGDFRSQGAEERYYPDPTQGRSSSISP. Tyr-32 bears the Phosphotyrosine mark. Position 50 is a phosphoserine (Ser-50). The SH3 domain maps to 65-126; sequence TGVTIFVALY…PSNYVAPVDS (62 aa). One can recognise an SH2 domain in the interval 132–229; it reads WYFGKISRKD…GLCYLLTAPC (98 aa). Position 196 is a phosphotyrosine (Tyr-196). Ser-206 is subject to Phosphoserine. The region spanning 251 to 504 is the Protein kinase domain; sequence IALDRRLGTG…YLQSFLEDYF (254 aa). Residues 257-265 and Lys-279 contribute to the ATP site; that span reads LGTGCFGDV. Asp-370 acts as the Proton acceptor in catalysis. Position 400 is a phosphotyrosine; by autocatalysis (Tyr-400). Residue Tyr-511 is modified to Phosphotyrosine; by SRC.

The protein belongs to the protein kinase superfamily. Tyr protein kinase family. SRC subfamily. In terms of assembly, interacts with ITGB1, ITGB2, MS4A2/FCER1B and FCGR2. Interacts (via SH2 domain) with SYK (tyrosine phosphorylated). Interacts (via SH2 domain) with FLT3 (tyrosine phosphorylated). Interacts with PTK2/FAK1. Interacts (via SH2 domain) with HCLS1 (tyrosine phosphorylated by SYK). Interacts with SIRPA and PTPNS1. Interacts (not phosphorylated on tyrosine residues) with CBL; FGR tyrosine phosphorylation promotes dissociation. Interacts with CLNK. In terms of processing, ubiquitinated. Becomes ubiquitinated in response to ITGB2 signaling; this does not lead to degradation. Phosphorylated. Autophosphorylated on tyrosine residues. Becomes phosphorylated in response to FCGR2 engagement, cell adhesion and signaling by ITGB2. Prior phosphorylation at Tyr-511 by SRC inhibits ulterior autophosphorylation at Tyr-400. Detected in brain cortex (at protein level).

The protein resides in the cell membrane. It is found in the cell projection. It localises to the ruffle membrane. The protein localises to the cytoplasm. Its subcellular location is the cytosol. The protein resides in the cytoskeleton. It is found in the mitochondrion inner membrane. It localises to the mitochondrion intermembrane space. The enzyme catalyses L-tyrosyl-[protein] + ATP = O-phospho-L-tyrosyl-[protein] + ADP + H(+). Activated by autophosphorylation. Prior phosphorylation at Tyr-511 by SRC inhibits ulterior autophosphorylation at Tyr-400. Activated by phorbol myristate acetate, phosphatidic acid and poly-Lys. Binding (via SH2 domain) of HCLS1 that is already phosphorylated by SYK strongly increases kinase activity. Its function is as follows. Non-receptor tyrosine-protein kinase that transmits signals from cell surface receptors devoid of kinase activity and contributes to the regulation of immune responses, including neutrophil, monocyte, macrophage and mast cell functions, cytoskeleton remodeling in response to extracellular stimuli, phagocytosis, cell adhesion and migration. Promotes mast cell degranulation, release of inflammatory cytokines and IgE-mediated anaphylaxis. Acts downstream of receptors that bind the Fc region of immunoglobulins, such as MS4A2/FCER1B, FCER1G and FCGR2. Acts downstream of ITGB1 and ITGB2, and regulates actin cytoskeleton reorganization, cell spreading and adhesion. Depending on the context, activates or inhibits cellular responses. Functions as a negative regulator of ITGB2 signaling, phagocytosis and SYK activity in monocytes. Required for normal ITGB1 and ITGB2 signaling, normal cell spreading and adhesion in neutrophils and macrophages. Functions as a positive regulator of cell migration and regulates cytoskeleton reorganization via RAC1 activation. Phosphorylates SYK (in vitro) and promotes SYK-dependent activation of AKT1 and MAP kinase signaling. Phosphorylates PLD2 in antigen-stimulated mast cells, leading to PLD2 activation and the production of the signaling molecules lysophosphatidic acid and diacylglycerol. Promotes activation of PIK3R1. Phosphorylates FASLG, and thereby regulates its ubiquitination and subsequent internalization. Phosphorylates ABL1. Promotes phosphorylation of CBL, CTTN, PIK3R1, PTK2/FAK1, PTK2B/PYK2 and VAV2. Phosphorylates HCLS1 that has already been phosphorylated by SYK, but not unphosphorylated HCLS1. Together with CLNK, it acts as a negative regulator of natural killer cell-activating receptors and inhibits interferon-gamma production. The protein is Tyrosine-protein kinase Fgr (Fgr) of Rattus norvegicus (Rat).